A 427-amino-acid chain; its full sequence is A-kinase anchor protein 5 (427 aa).

Residues 1–122 (METTISEIHV…DADLSKKKAK (122 aa)) are disordered. The essential to the intracellular anchoring function stretch occupies residues 1-170 (METTISEIHV…LDIQTQTPLN (170 aa)). The segment covering 8–19 (IHVENKDEKRSA) has biased composition (basic and acidic residues). Position 22 is a phosphoserine (Ser-22). Cys-36 carries the S-palmitoyl cysteine lipid modification. A compositionally biased stretch (basic residues) spans 37–48 (FKRRKKAAKALK). Positions 76–96 (RGAWASLKRLVTRRKRSESSK) match the AKAP CaM-binding motif. A compositionally biased stretch (basic and acidic residues) spans 92–102 (SESSKQQKPLE). Cys-129 is lipidated: S-palmitoyl cysteine. Polar residues-rich tracts occupy residues 171–182 (DQATKAKSTQDL) and 242–252 (VQPQQASPLET). Disordered stretches follow at residues 171–205 (DQATKAKSTQDLSEGISRKDGDEVCESNVSNSTTS), 239–269 (KQDVQPQQASPLETSETDHQQPVLSDVPPLP), and 281–333 (SNST…EESK). Positions 302–333 (EETKPKDTELSQESDFKENGITEEKSKSEESK) are enriched in basic and acidic residues. Residues 392 to 405 (LIETASSLVKNAIQ) form a PKA-RII subunit binding domain region. Residues 410–427 (QLVNEMASDDNKINNLLQ) are tethers NFATC2 to CRAC channels.

Binding protein for dimer of the RII-beta regulatory subunit of cAMP-dependent protein kinase (PKA) and also for the protein kinase C (PKC) and the phosphatase calcineurin (PP2B). Each enzyme is inhibited when bound to the anchoring protein. Also binds the beta2-adrenergic receptor. Part of a complex containing AKAP5, ADCY5, ADCY6 and PDE4C. Interacts with ADCY8, and enhances its phosphorylation at lipid rafts. Interacts with ORAI1 (isoform alpha) (via N-terminus) upon store depletion and in response to LTC4. Does not interact with ORAI2 and ORAI3 paralogs. Interacts (via leucine zipper domain) with NFATC2/NFAT1. Interacts with calmodulin; the interaction is calcium-independent. Interacts with KCNQ2; the interaction may help KCNQ2 channel complex to retain calcium-bound calmodulin. Interacts with KCNK2; the channel is recruited to postsynaptic microdomains by AKAP5 where it can integrate neurotransmitter receptor signals. Part of a complex composed of AKAP5 and ADRB2. Post-translationally, palmitoylated. Palmitoylation at Cys-36 and Cys-129 play a key role in the targeting of AKAP5 to lipid rafts. Palmitoylation by ZDHHC2 is required for AKAP5 function in LTP-stimulated recycling endosome exocytosis. In terms of tissue distribution, predominantly in the cerebral cortex and the postsynaptic densities of the forebrain, and to a lesser extent in adrenal medulla, lung and anterior pituitary.

It localises to the postsynaptic recycling endosome membrane. The protein resides in the cell projection. It is found in the dendrite. Its subcellular location is the postsynaptic cell membrane. In terms of biological role, multivalent scaffold protein that anchors the cAMP-dependent protein kinase/PKA to cytoskeletal and/or organelle-associated proteins, targeting the signal carried by cAMP to specific intracellular effectors. Association with the beta2-adrenergic receptor (beta2-AR) not only regulates beta2-AR signaling pathway, but also the activation by PKA by switching off the beta2-AR signaling cascade. Plays a role in long term synaptic potentiation by regulating protein trafficking from the dendritic recycling endosomes to the plasma membrane and controlling both structural and functional plasticity at excitatory synapses. In hippocampal pyramidal neurons, recruits KCNK2/TREK-1 channel at postsynaptic dense bodies microdomains and converts it to a leak channel no longer sensitive to stimulation by arachidonic acid, acidic pH or mechanical stress, nor inhibited by Gq-coupled receptors but still under the negative control of Gs-coupled receptors. Associates with ORAI1 pore-forming subunit of CRAC channels in Ca(2+) signaling microdomains where it recruits NFATC2/NFAT1 and couples store-operated Ca(2+) influx to calmodulin and calcineurin signaling and activation of NFAT-dependent transcriptional responses. This chain is A-kinase anchor protein 5 (AKAP5), found in Homo sapiens (Human).